Consider the following 309-residue polypeptide: Ribosomal protein L11 methyltransferase (309 aa).

S-adenosyl-L-methionine-binding residues include Thr-160, Gly-181, Asp-203, and Asn-245.

The protein belongs to the methyltransferase superfamily. PrmA family.

Its subcellular location is the cytoplasm. The catalysed reaction is L-lysyl-[protein] + 3 S-adenosyl-L-methionine = N(6),N(6),N(6)-trimethyl-L-lysyl-[protein] + 3 S-adenosyl-L-homocysteine + 3 H(+). Functionally, methylates ribosomal protein L11. The chain is Ribosomal protein L11 methyltransferase from Caldanaerobacter subterraneus subsp. tengcongensis (strain DSM 15242 / JCM 11007 / NBRC 100824 / MB4) (Thermoanaerobacter tengcongensis).